Reading from the N-terminus, the 957-residue chain is MTENPFHYLVEPLSGTSDKTFFNVSKLKATEYDSLPYCIRVVLEAVVRNCDGVLVKEQDAFNILNWKATCEFKEIPFLPARVMLQDFTGIPAMVDFAAMRDAISKFGRDPKQVNPACPTDLIADHSLQLDFTKCIVAQNVSSVPTVETHKPTTKQSPGKTLGRKAQCRSQSGCKGACELGAAHGSSREQIENTPMLCPFHLQPIAEPEAALKSLEIEFNRNKERLQFFKWCTKAFHNVAVIPPETGTVHQVNLEFLSRVVMEEKGFIYPDSVLGTDSHTTMVNGLGILGLGVGGIESEAAMLGVPITLTLPEVIGCELTGAINPLATSIDVVLSITKHLKQAGVAGTFVEFFGNGVSQLSVADRTTIANMCPEYGATVAFFPVDSVTLRHLKQTGVDVQSVSTFETYLQAVKLLRQENVQQPEYSKVLQINLNSIVPYVSGPKRPQDRISVMDMKKDFEACLNEKTGLKGFQIPEKKQSIMVPVTYENSEYSLSHGCVVIAAVTSCTNNCNPSVMLTAGLLAKKAVEAGLTVKPYIKTSLSPGSGTVTYYLSASGVLPYLSKLGFDIIGYGCARCVGNTNPLPESIVTAIKEGELVACGVFSGNKHFEGNRCSCVCANYLASPPLVVAYALAGTVNIDLQTEALGENAQGEKIFLRDIWPSREEVLEVEETMVIPSMFSELKLKIEKQNTRWNLLDAPESTLFPWDLRSTFIRSPPFFHKLEKIPPPIQPIEKAHVLLYLGDSVTTDHMSPAGSIPRTSPAAKYLIQKNLIPREFNSYGARRGNDAVMTRGTFANMKLFNKLVGKTGPKTFHLPSGQIMDVFDAAELYQKAEIPLIIIAGKKYGLGNSRDWAAKGPFLLGVRVVIAESYEKIHKDHLVGMGIAPLQFLSGENAETLGLSAKEQYSFSLPVDLTPRHKIEVKTNTGKTFHVIAAFDNEAEVTFYKHGGILSYVARKYL.

[4Fe-4S] cluster-binding residues include C506, C572, and C575.

This sequence belongs to the aconitase/IPM isomerase family. [4Fe-4S] cluster serves as cofactor. Post-translationally, ubiquitinated and degraded by the proteasome in presence of high level of iron and oxygen.

It is found in the cytoplasm. In terms of biological role, RNA-binding protein that binds to iron-responsive elements (IRES), which are stem-loop structures found in the 5'-UTR of ferritin, and delta aminolevulinic acid synthase mRNAs, and in the 3'-UTR of transferrin receptor mRNA. Binding to the IRE element in ferritin results in the repression of its mRNA translation. Binding of the protein to the transferrin receptor mRNA inhibits the degradation of this otherwise rapidly degraded mRNA. This is Iron-responsive element-binding protein 2 (ireb2) from Xenopus tropicalis (Western clawed frog).